Consider the following 428-residue polypeptide: Gamma-glutamyl phosphate reductase (428 aa).

It belongs to the gamma-glutamyl phosphate reductase family.

It is found in the cytoplasm. The enzyme catalyses L-glutamate 5-semialdehyde + phosphate + NADP(+) = L-glutamyl 5-phosphate + NADPH + H(+). It functions in the pathway amino-acid biosynthesis; L-proline biosynthesis; L-glutamate 5-semialdehyde from L-glutamate: step 2/2. Its function is as follows. Catalyzes the NADPH-dependent reduction of L-glutamate 5-phosphate into L-glutamate 5-semialdehyde and phosphate. The product spontaneously undergoes cyclization to form 1-pyrroline-5-carboxylate. The chain is Gamma-glutamyl phosphate reductase from Streptomyces avermitilis (strain ATCC 31267 / DSM 46492 / JCM 5070 / NBRC 14893 / NCIMB 12804 / NRRL 8165 / MA-4680).